A 248-amino-acid polypeptide reads, in one-letter code: Ureidoacrylate amidohydrolase RutB (248 aa).

Aspartate 43 acts as the Proton acceptor in catalysis. The active site involves lysine 152. The active-site Nucleophile is cysteine 185.

It belongs to the isochorismatase family. RutB subfamily.

The catalysed reaction is (Z)-3-ureidoacrylate + H2O + H(+) = (Z)-3-aminoacrylate + NH4(+) + CO2. The enzyme catalyses (Z)-3-ureidoacrylate + H2O = (Z)-3-aminoacrylate + carbamate + H(+). It carries out the reaction (Z)-2-methylureidoacrylate + H2O + H(+) = (Z)-2-methylaminoacrylate + NH4(+) + CO2. Its function is as follows. Hydrolyzes ureidoacrylate to form aminoacrylate and carbamate. The carbamate hydrolyzes spontaneously, thereby releasing one of the nitrogen atoms of the pyrimidine ring as ammonia and one of its carbon atoms as CO2. In Serratia proteamaculans (strain 568), this protein is Ureidoacrylate amidohydrolase RutB.